Here is a 79-residue protein sequence, read N- to C-terminus: Succinate dehydrogenase assembly factor 1, mitochondrial (79 aa).

It belongs to the complex I LYR family. SDHAF1 subfamily. As to quaternary structure, interacts with sdh2 within an sdh1-sdh2 subcomplex.

It localises to the mitochondrion matrix. In terms of biological role, plays an essential role in the assembly of succinate dehydrogenase (SDH), an enzyme complex (also referred to as respiratory complex II) that is a component of both the tricarboxylic acid (TCA) cycle and the mitochondrial electron transport chain, and which couples the oxidation of succinate to fumarate with the reduction of ubiquinone (coenzyme Q) to ubiquinol. Promotes maturation of the iron-sulfur protein subunit sdh2 of the SDH catalytic dimer, protecting it from the deleterious effects of oxidants. May act together with SDHAF3. The sequence is that of Succinate dehydrogenase assembly factor 1, mitochondrial from Schizosaccharomyces pombe (strain 972 / ATCC 24843) (Fission yeast).